Reading from the N-terminus, the 285-residue chain is Undecaprenyl-diphosphatase 2 (285 aa).

8 helical membrane-spanning segments follow: residues 5–25, 47–67, 86–106, 122–142, 156–176, 198–218, 235–255, and 265–285; these read MDLL…LLPV, MTFL…VYFW, WYVL…QSLI, LFSN…LIIL, LPSA…RGFS, FSFA…LVRL, SLLL…LLAL, and GRWY…LTLA.

Belongs to the UppP family.

It localises to the cell inner membrane. The enzyme catalyses di-trans,octa-cis-undecaprenyl diphosphate + H2O = di-trans,octa-cis-undecaprenyl phosphate + phosphate + H(+). In terms of biological role, catalyzes the dephosphorylation of undecaprenyl diphosphate (UPP). Confers resistance to bacitracin. The protein is Undecaprenyl-diphosphatase 2 of Acinetobacter baylyi (strain ATCC 33305 / BD413 / ADP1).